Reading from the N-terminus, the 576-residue chain is DNA primase (576 aa).

A CHC2-type zinc finger spans residues 40 to 64; it reads CPFHNEKTPSFNVVAKKQFYHCFGC. A Toprim domain is found at 251 to 333; that stretch reads DSIIVVEGYM…GLDAGFIFLP (83 aa). Residues Glu-257, Asp-301, and Asp-303 each coordinate Mg(2+).

Belongs to the DnaG primase family. In terms of assembly, monomer. Interacts with DnaB. Zn(2+) serves as cofactor. The cofactor is Mg(2+).

The enzyme catalyses ssDNA + n NTP = ssDNA/pppN(pN)n-1 hybrid + (n-1) diphosphate.. In terms of biological role, RNA polymerase that catalyzes the synthesis of short RNA molecules used as primers for DNA polymerase during DNA replication. The sequence is that of DNA primase from Legionella pneumophila.